The primary structure comprises 348 residues: Centromere protein N-B (348 aa).

This sequence belongs to the CENP-N/CHL4 family.

It is found in the nucleus. The protein localises to the chromosome. The protein resides in the centromere. Probable component of a centromeric complex involved in assembly of kinetochore proteins, mitotic progression and chromosome segregation. This Xenopus laevis (African clawed frog) protein is Centromere protein N-B (cenpn-b).